We begin with the raw amino-acid sequence, 270 residues long: Tryptophan synthase alpha chain (270 aa).

Catalysis depends on proton acceptor residues Glu-49 and Asp-60.

Belongs to the TrpA family. As to quaternary structure, tetramer of two alpha and two beta chains.

It catalyses the reaction (1S,2R)-1-C-(indol-3-yl)glycerol 3-phosphate + L-serine = D-glyceraldehyde 3-phosphate + L-tryptophan + H2O. It participates in amino-acid biosynthesis; L-tryptophan biosynthesis; L-tryptophan from chorismate: step 5/5. The alpha subunit is responsible for the aldol cleavage of indoleglycerol phosphate to indole and glyceraldehyde 3-phosphate. This chain is Tryptophan synthase alpha chain, found in Thermobifida fusca (strain YX).